A 228-amino-acid polypeptide reads, in one-letter code: Urease accessory protein UreF (228 aa).

Belongs to the UreF family. UreD, UreF and UreG form a complex that acts as a GTP-hydrolysis-dependent molecular chaperone, activating the urease apoprotein by helping to assemble the nickel containing metallocenter of UreC. The UreE protein probably delivers the nickel.

The protein resides in the cytoplasm. Functionally, required for maturation of urease via the functional incorporation of the urease nickel metallocenter. The sequence is that of Urease accessory protein UreF from Prochlorococcus marinus (strain MIT 9301).